A 133-amino-acid polypeptide reads, in one-letter code: Fatty acid-binding protein (133 aa).

The protein belongs to the calycin superfamily. Fatty-acid binding protein (FABP) family.

This is Fatty acid-binding protein from Clonorchis sinensis (Chinese liver fluke).